The chain runs to 416 residues: Pre-mRNA-splicing factor slu-7 (416 aa).

A disordered region spans residues methionine 1 to asparagine 34. Residues glycine 95–glutamate 112 form a CCHC-type zinc finger. Composition is skewed to basic and acidic residues over residues arginine 168–aspartate 179 and aspartate 188–arginine 213. The interval arginine 168–arginine 213 is disordered.

The protein belongs to the SLU7 family. Associated with the spliceosome.

The protein resides in the nucleus. Functionally, involved in pre-mRNA splicing. In Neurospora crassa (strain ATCC 24698 / 74-OR23-1A / CBS 708.71 / DSM 1257 / FGSC 987), this protein is Pre-mRNA-splicing factor slu-7 (slu-7).